Consider the following 315-residue polypeptide: Ribosomal RNA small subunit methyltransferase H (315 aa).

S-adenosyl-L-methionine contacts are provided by residues 37-39 (GGH), Asp-57, Phe-83, Asp-105, and Gln-112.

The protein belongs to the methyltransferase superfamily. RsmH family.

It is found in the cytoplasm. The catalysed reaction is cytidine(1402) in 16S rRNA + S-adenosyl-L-methionine = N(4)-methylcytidine(1402) in 16S rRNA + S-adenosyl-L-homocysteine + H(+). Its function is as follows. Specifically methylates the N4 position of cytidine in position 1402 (C1402) of 16S rRNA. The chain is Ribosomal RNA small subunit methyltransferase H from Pseudomonas fluorescens (strain ATCC BAA-477 / NRRL B-23932 / Pf-5).